The following is a 689-amino-acid chain: FAST kinase domain-containing protein 2, mitochondrial (689 aa).

Residues Ser-113 and Ser-126 each carry the phosphoserine modification. Positions 617 to 674 constitute an RAP domain; the sequence is VAVLCVPKSVYCLNSCHPRGLMAMKIRHLNVMGFHVILIHNWELKKLKMEDAVTFVRK.

This sequence belongs to the FAST kinase family. Monomer. Found in a complex with GRSF1, DDX28, DHX30 and FASTKD5. Associates with the 16S mitochondrial rRNA (16S mt-rRNA). Forms a regulatory protein-RNA complex, consisting of RCC1L, NGRN, RPUSD3, RPUSD4, TRUB2, FASTKD2 and 16S mt-rRNA. Ubiquitously expressed. Expression detected in spleen, testis, colon, heart, smooth muscle, kidney, brain, lung, liver, brown and white adipose tissue with highest expression in testis, heart and smooth muscle.

The protein resides in the mitochondrion matrix. Its subcellular location is the mitochondrion nucleoid. Functionally, plays an important role in assembly of the mitochondrial large ribosomal subunit. As a component of a functional protein-RNA module, consisting of RCC1L, NGRN, RPUSD3, RPUSD4, TRUB2, FASTKD2 and 16S mitochondrial ribosomal RNA (16S mt-rRNA), controls 16S mt-rRNA abundance and is required for intra-mitochondrial translation. May play a role in mitochondrial apoptosis. This is FAST kinase domain-containing protein 2, mitochondrial (Fastkd2) from Mus musculus (Mouse).